The following is a 538-amino-acid chain: MLQIGEDVDYLLIPREVRLAGGVWRVISKPATKEAEFRERLTQFLEEEGRTLEDVARIMEKSTPHPPQPPKKPKEPRVRRRVQQMVTPPPRLVVGTYDSSNASDSEFSDFETSRDKSRQGPRRGKKVRKMPVSYLGSKFLGSDLESEDDEELVEAFLRRQEKQPSAPPARRRVNLPVPMFEDNLGPQLSKADRWREYVSQVSWGKLKRRVKGWAPRAGPGVGEARLASTAVESAGVSSAPEGTSPGDRLGNAGDVCVPQASPRRWRPKINWASFRRRRKEQTAPTGQGADIEADQGGEAADSQREEAIADQREGAAGNQRAGAPADQGAEAADNQREEAADNQRAGAPAEEGAEAADNQREEAADNQRAEAPADQRSQGTDNHREEAADNQRAEAPADQGSEVTDNQREEAVHDQRERAPAVQGADNQRAQARAGQRAEAAHNQRAGAPGIQEAEVSAAQGTTGTAPGARARKQVKTVRFQTPGRFSWFCKRRRAFWHTPRLPTLPKRVPRAGEARNLRVLRAEARAEAEQGEQEDQL.

Residues isoleucine 58–arginine 128 form a disordered region. Positions glutamine 119–arginine 128 are enriched in basic residues. Serine 142, serine 146, and serine 261 each carry phosphoserine. The segment at tryptophan 213–lysine 473 is disordered. Positions aspartate 301–glutamate 313 are enriched in basic and acidic residues. Over residues alanine 321–alanine 332 the composition is skewed to low complexity. A coiled-coil region spans residues alanine 349–asparagine 366. Basic and acidic residues-rich tracts occupy residues aspartate 357–alanine 373, aspartate 381–arginine 392, and aspartate 405–alanine 419. Composition is skewed to low complexity over residues glutamine 428–alanine 438 and alanine 458–alanine 469. A PxLPxI/L motif; mediates interaction with ANKRA2 motif is present at residues proline 500–proline 506. Positions glutamate 514–glutamate 535 form a coiled coil.

Component of the 3M complex, composed of core components CUL7, CCDC8 and OBSL1. Interacts (via PxLPxI/L motif) with ANKRA2 (via ankyrin repeats); may link the 3M complex to histone deacetylases including HDAC4 and HDAC5. As to expression, widely expressed with low levels in spleen, skeletal muscle, small intestine, kidney and liver.

It is found in the cytoplasm. The protein resides in the cytoskeleton. The protein localises to the microtubule organizing center. Its subcellular location is the centrosome. Core component of the 3M complex, a complex required to regulate microtubule dynamics and genome integrity. It is unclear how the 3M complex regulates microtubules, it could act by controlling the level of a microtubule stabilizer. Required for localization of CUL7 to the centrosome. The polypeptide is Coiled-coil domain-containing protein 8 (CCDC8) (Homo sapiens (Human)).